The chain runs to 116 residues: C-C motif chemokine 6 (116 aa).

Positions 1–21 are cleaved as a signal peptide; the sequence is MRNSKTAISFFILVAVLGSQA. 3 disulfide bridges follow: C50–C73, C51–C89, and C60–C100.

This sequence belongs to the intercrine beta (chemokine CC) family. Post-translationally, the N-terminal is proteolytically cleaved by proteases associated with inflammatory responses. The processed forms CL6(22-95) and CCL6(23-95) show increase in CCR1-mediated signaling and chemotaxis assays in vitro. As to expression, expressed in myelopoietic bone marrow cultures stimulated by GM-CSF.

The protein localises to the secreted. Its function is as follows. Chemotactic factor that attracts mostly macrophage, but it can also attract B cells, CD4(+) lymphocytes and eosinophils. The polypeptide is C-C motif chemokine 6 (Ccl6) (Mus musculus (Mouse)).